A 508-amino-acid polypeptide reads, in one-letter code: Photosystem II CP47 reaction center protein (508 aa).

Helical transmembrane passes span 21–36 (AVHI…WAGS), 101–115 (IVFS…IWHW), 140–156 (GIHL…FGTF), 203–218 (IAAG…FHLS), 237–252 (VLSS…AFVV), and 457–472 (SFAL…HGAR).

This sequence belongs to the PsbB/PsbC family. PsbB subfamily. In terms of assembly, PSII is composed of 1 copy each of membrane proteins PsbA, PsbB, PsbC, PsbD, PsbE, PsbF, PsbH, PsbI, PsbJ, PsbK, PsbL, PsbM, PsbT, PsbX, PsbY, PsbZ, Psb30/Ycf12, at least 3 peripheral proteins of the oxygen-evolving complex and a large number of cofactors. It forms dimeric complexes. Binds multiple chlorophylls. PSII binds additional chlorophylls, carotenoids and specific lipids. serves as cofactor.

The protein resides in the plastid. It is found in the chloroplast thylakoid membrane. Its function is as follows. One of the components of the core complex of photosystem II (PSII). It binds chlorophyll and helps catalyze the primary light-induced photochemical processes of PSII. PSII is a light-driven water:plastoquinone oxidoreductase, using light energy to abstract electrons from H(2)O, generating O(2) and a proton gradient subsequently used for ATP formation. The polypeptide is Photosystem II CP47 reaction center protein (Citrus sinensis (Sweet orange)).